The primary structure comprises 120 residues: Large ribosomal subunit protein bL12 (120 aa).

Belongs to the bacterial ribosomal protein bL12 family. In terms of assembly, homodimer. Part of the ribosomal stalk of the 50S ribosomal subunit. Forms a multimeric L10(L12)X complex, where L10 forms an elongated spine to which 2 to 4 L12 dimers bind in a sequential fashion. Binds GTP-bound translation factors.

Functionally, forms part of the ribosomal stalk which helps the ribosome interact with GTP-bound translation factors. Is thus essential for accurate translation. In Lactobacillus helveticus (strain DPC 4571), this protein is Large ribosomal subunit protein bL12.